A 210-amino-acid chain; its full sequence is Oxygen-insensitive NADPH nitroreductase (210 aa).

150–155 (GVSLMG) contributes to the NADP(+) binding site.

It belongs to the nitroreductase family.

In terms of biological role, reduction of a variety of nitroaromatic compounds using NADPH as source of reducing equivalents; two electrons are transferred. The protein is Oxygen-insensitive NADPH nitroreductase (rdxA) of Helicobacter pylori (strain J99 / ATCC 700824) (Campylobacter pylori J99).